The sequence spans 141 residues: Large ribosomal subunit protein uL11 (141 aa).

It belongs to the universal ribosomal protein uL11 family. Part of the ribosomal stalk of the 50S ribosomal subunit. Interacts with L10 and the large rRNA to form the base of the stalk. L10 forms an elongated spine to which L12 dimers bind in a sequential fashion forming a multimeric L10(L12)X complex. Post-translationally, one or more lysine residues are methylated.

Its function is as follows. Forms part of the ribosomal stalk which helps the ribosome interact with GTP-bound translation factors. This chain is Large ribosomal subunit protein uL11, found in Prosthecochloris aestuarii (strain DSM 271 / SK 413).